A 1259-amino-acid chain; its full sequence is Clustered mitochondria protein homolog (1259 aa).

Residues 1-27 (MSQTNGNMEHSKETPQSQEVEQLTNGN) show a composition bias toward polar residues. Residues 1-38 (MSQTNGNMEHSKETPQSQEVEQLTNGNHPEEQQEEEEN) form a disordered region. A Clu domain is found at 324-568 (DITRSQESYL…RVTPLDVMWQ (245 aa)). Composition is skewed to basic and acidic residues over residues 612 to 628 (AEAE…SKEQ) and 634 to 647 (TEEK…QERV). Disordered stretches follow at residues 612–647 (AEAE…QERV) and 881–908 (VVNG…PSRA). TPR repeat units lie at residues 982–1015 (AKLY…TERT), 1024–1057 (ILAY…WKII), and 1066–1099 (ITTM…CESL). 2 disordered regions span residues 1192–1215 (TKVQ…ANAS) and 1229–1259 (EGGD…KSSA).

The protein belongs to the CLU family. In terms of assembly, may associate with the eukaryotic translation initiation factor 3 (eIF-3) complex.

It localises to the cytoplasm. Functionally, mRNA-binding protein involved in proper cytoplasmic distribution of mitochondria. This Aspergillus clavatus (strain ATCC 1007 / CBS 513.65 / DSM 816 / NCTC 3887 / NRRL 1 / QM 1276 / 107) protein is Clustered mitochondria protein homolog.